The sequence spans 161 residues: MRTGLGYDLHRLVRGKKLMMGGVHIPFKKGEKAHSDGDVLLHAITDALLGACGMGDIGEFFPPSDKKWKDANSSELLSTVWERISEAGWKIQNIDCVIIIEEPKILPFREEIRKSIAGILKIEKEQIFIKAKTGEGIGIIGRGKAVAALASCLIFCRHTQE.

A divalent metal cation is bound by residues Asp-8 and His-10. Residues 8–10 and 34–35 each bind 4-CDP-2-C-methyl-D-erythritol 2-phosphate; these read DLH and HS. Residue His-42 participates in a divalent metal cation binding. Residues 56–58 and Arg-142 contribute to the 4-CDP-2-C-methyl-D-erythritol 2-phosphate site; that span reads DIG.

This sequence belongs to the IspF family. Homotrimer. A divalent metal cation serves as cofactor.

It carries out the reaction 4-CDP-2-C-methyl-D-erythritol 2-phosphate = 2-C-methyl-D-erythritol 2,4-cyclic diphosphate + CMP. It functions in the pathway isoprenoid biosynthesis; isopentenyl diphosphate biosynthesis via DXP pathway; isopentenyl diphosphate from 1-deoxy-D-xylulose 5-phosphate: step 4/6. Its function is as follows. Involved in the biosynthesis of isopentenyl diphosphate (IPP) and dimethylallyl diphosphate (DMAPP), two major building blocks of isoprenoid compounds. Catalyzes the conversion of 4-diphosphocytidyl-2-C-methyl-D-erythritol 2-phosphate (CDP-ME2P) to 2-C-methyl-D-erythritol 2,4-cyclodiphosphate (ME-CPP) with a corresponding release of cytidine 5-monophosphate (CMP). This Treponema denticola (strain ATCC 35405 / DSM 14222 / CIP 103919 / JCM 8153 / KCTC 15104) protein is 2-C-methyl-D-erythritol 2,4-cyclodiphosphate synthase.